The following is a 223-amino-acid chain: Zinc-finger homeodomain protein 12 (223 aa).

Polar residues predominate over residues 1 to 20 (MSSLSKPNRQFLSPTTNNQD). Residues 1 to 24 (MSSLSKPNRQFLSPTTNNQDTGRE) form a disordered region. Residues 37–88 (YNECLKNHAVSLGGHALDGCGEFTPKSTTILTDPPSLRCDACGCHRNFHRRS) form a ZF-HD dimerization-type; degenerate zinc finger. Residues 147 to 204 (KKHKRTKFTAEQKVKMRGFAERAGWKINGWDEKWVREFCSEVGIERKVLKVWIHNNKY) constitute a DNA-binding region (homeobox; atypical).

In terms of assembly, homo- and heterodimer with other ZFHD proteins. Interacts with ZHD11.

Its subcellular location is the nucleus. Functionally, putative transcription factor. The sequence is that of Zinc-finger homeodomain protein 12 (ZHD12) from Arabidopsis thaliana (Mouse-ear cress).